The chain runs to 186 residues: PR-toxin biosynthesis cluster protein 7 (186 aa).

Residues 24–43 (LGEVTTGGVTPRGTFIFCPI) traverse the membrane as a helical segment.

It localises to the membrane. The protein operates within sesquiterpene biosynthesis. Its function is as follows. Part of the gene cluster that mediates the biosynthesis of PR-toxin, a bicyclic sesquiterpene belonging to the eremophilane class and acting as a mycotoxin. The first step of the pathway is catalyzed by the aristolochene synthase which performs the cyclization of trans,trans-farnesyl diphosphate (FPP) to the bicyclic sesquiterpene aristolochene. Following the formation of aristolochene, the non-oxygenated aristolochene is converted to the trioxygenated intermediate eremofortin B, via 7-epi-neopetasone. This conversion appears to involve three enzymes, a hydroxysterol oxidase-like enzyme, the quinone-oxidase prx3 that forms the quinone-type-structure in the bicyclic nucleus of aristolochene with the C8-oxo group and the C-3 hydroxyl group, and the P450 monooxygenase ORF6 that introduces the epoxide at the double bond between carbons 1 and 2. No monoxy or dioxy-intermediates have been reported to be released to the broth, so these three early oxidative reactions may be coupled together. Eremofortin B is further oxidized by another P450 monooxygenase, that introduces a second epoxide between carbons 7 and 11 prior to acetylation to eremofortin A by the acetyltransferase ORF8. The second epoxidation may be performed by a second P450 monooxygenase. After the acetylation step, eremofortin A is converted to eremofortin C and then to PR-toxin. First the conversion of eremofortin A to eremofortin C proceeds by oxidation of the side chain of the molecule at C-12 and is catalyzed by the short-chain oxidoreductase prx1. The cytochrome P450 monooxygenase ORF6 is probably also involved in this step. The primary alcohol formed at C-12 is finally oxidized by the short-chain alcohol dehydrogenase prx4 that forms PR-toxin. The polypeptide is PR-toxin biosynthesis cluster protein 7 (Penicillium roqueforti (strain FM164)).